The primary structure comprises 130 residues: Phosphomevalonate dehydratase small subunit (130 aa).

Serine 62 acts as the Proton acceptor in catalysis.

It belongs to the AcnX type II small subunit family. In terms of assembly, heterodimer composed of a large subunit (PMDh-L) and a small subunit (PMDh-S).

It carries out the reaction (R)-5-phosphomevalonate = (2E)-3-methyl-5-phosphooxypent-2-enoate + H2O. It functions in the pathway isoprenoid biosynthesis; isopentenyl diphosphate biosynthesis via mevalonate pathway. In terms of biological role, component of a hydro-lyase that catalyzes the dehydration of mevalonate 5-phosphate (MVA5P) to form trans-anhydromevalonate 5-phosphate (tAHMP). Involved in the archaeal mevalonate (MVA) pathway, which provides fundamental precursors for isoprenoid biosynthesis, such as isopentenyl diphosphate (IPP) and dimethylallyl diphosphate (DMAPP). This chain is Phosphomevalonate dehydratase small subunit, found in Thermococcus onnurineus (strain NA1).